The sequence spans 160 residues: Large ribosomal subunit protein uL30m (160 aa).

A mitochondrion-targeting transit peptide spans 1-34; sequence MAGVLRSAFPRPPCRLQTVKKGAESLIGTEWIRH. A disordered region spans residues 44 to 64; sequence KVFQPKPEDHEKYGGDPQNPH.

This sequence belongs to the universal ribosomal protein uL30 family. As to quaternary structure, component of the mitochondrial ribosome large subunit (39S) which comprises a 16S rRNA and about 50 distinct proteins.

Its subcellular location is the mitochondrion. The protein is Large ribosomal subunit protein uL30m (Mrpl30) of Mus musculus (Mouse).